Consider the following 635-residue polypeptide: Threonine--tRNA ligase (635 aa).

The TGS domain occupies 1-61 (MIKITLKDGK…HKDSSLEILT (61 aa)). Residues 242 to 532 (DHRKLGKELD…LIEQYAGAFP (291 aa)) are catalytic. Zn(2+) contacts are provided by cysteine 333, histidine 384, and histidine 509.

Belongs to the class-II aminoacyl-tRNA synthetase family. Homodimer. Zn(2+) serves as cofactor.

It is found in the cytoplasm. The enzyme catalyses tRNA(Thr) + L-threonine + ATP = L-threonyl-tRNA(Thr) + AMP + diphosphate + H(+). Its function is as follows. Catalyzes the attachment of threonine to tRNA(Thr) in a two-step reaction: L-threonine is first activated by ATP to form Thr-AMP and then transferred to the acceptor end of tRNA(Thr). Also edits incorrectly charged L-seryl-tRNA(Thr). The sequence is that of Threonine--tRNA ligase from Clostridium botulinum (strain Loch Maree / Type A3).